We begin with the raw amino-acid sequence, 528 residues long: MEATLPVCKSVTSTPGLFMGKTSGIRSSQCSFMMGNKVNFPRQRAQTAHVHCAKNGGALGVTCRAEKILVANRGEIAVRVIRTAHEMGIPCVAVYSTIDKDALHVKLADESVCIGEAPSSQSYLVIPNVLSAAISRRCTMLHPGYGFLAENAVFVEMCREHGINFIGPNPDSIRVMGDKSTARETMKKAGVPTVPGSDGLLQSTEEGVRLANEIGYPVMIKATAGGGGRGMRLAKEPDEFVKLLQQAKSEAAAAFGNDGVYLEKYVQNPRHIEFQVLADKFGNVVHFGERDCSIQRRNQKLLEEAPSPALTPELRKAMGDAAVSAAASIGYIGVGTVEFLLDERGSFYFMEMNTRIQVEHPVTEMISSVDLIEEQIRVAMGEKLRYKQEDIVLRGHSIECRINAEDAFKGFRPGPGRITAYLPSGGPFVRMDSHVYPDYVVPPSYDSLLGKLIVWAPTREKAIERMKRALDDTIITGVPTTIDYHKLILEIEDFKNGNVDTAFIPKHEKELAAPQQIIPAKQLTNSAA.

The N-terminal 51 residues, 1–51, are a transit peptide targeting the chloroplast; sequence MEATLPVCKSVTSTPGLFMGKTSGIRSSQCSFMMGNKVNFPRQRAQTAHVH. ATP contacts are provided by residues K179, K221, 227–228, 263–266, and H271; these read GG and EKYV. In terms of domain architecture, ATP-grasp spans 183-380; it reads RETMKKAGVP…LIEEQIRVAM (198 aa). Position 300 (K300) interacts with hydrogencarbonate. The ATP site is built by E338 and E351. Residues E338, E351, and N353 each contribute to the Mg(2+) site. Mn(2+) is bound by residues E338, E351, and N353. Residues R355, V358, and R401 each coordinate hydrogencarbonate. R355 is a catalytic residue. Position 401 (R401) interacts with biotin.

Acetyl-CoA carboxylase is a heterohexamer composed of biotin carboxyl carrier protein, biotin carboxylase and two subunits each of ACCase subunit alpha and ACCase plastid-coded subunit beta (accD). The cofactor is Mg(2+). It depends on Mn(2+) as a cofactor.

Its subcellular location is the plastid. The protein localises to the chloroplast. It catalyses the reaction N(6)-biotinyl-L-lysyl-[protein] + hydrogencarbonate + ATP = N(6)-carboxybiotinyl-L-lysyl-[protein] + ADP + phosphate + H(+). It participates in lipid metabolism; malonyl-CoA biosynthesis; malonyl-CoA from acetyl-CoA: step 1/1. In terms of biological role, this protein is a component of the acetyl coenzyme A carboxylase complex; first, biotin carboxylase catalyzes the carboxylation of the carrier protein and then the transcarboxylase transfers the carboxyl group to form malonyl-CoA. This is Biotin carboxylase 1, chloroplastic from Populus trichocarpa (Western balsam poplar).